Here is a 1245-residue protein sequence, read N- to C-terminus: Structural polyprotein (1245 aa).

Residues 1-106 (MNRGFFNMLG…KTKPGKRQRM (106 aa)) are disordered. The tract at residues 37–70 (GLASQIQQLTTAVSALVIGQATRPQNPRPRPPPR) is host transcription inhibition. Positions 38–49 (LASQIQQLTTAV) are enriched in polar residues. Residues 63-100 (PRPRPPPRQKKQAPKQPPKPKKPKPQEKKKKQPAKTKP) carry the Nuclear localization signal motif. A compositionally biased stretch (basic residues) spans 67 to 106 (PPPRQKKQAPKQPPKPKKPKPQEKKKKQPAKTKPGKRQRM). The binding to the viral RNA stretch occupies residues 86–115 (KPQEKKKKQPAKTKPGKRQRMALKLEADRL). The ribosome-binding stretch occupies residues 100-114 (PGKRQRMALKLEADR). In terms of domain architecture, Peptidase S3 spans 114–264 (RLFDVKNEDG…KTTPEGTEEW (151 aa)). Catalysis depends on His141, which acts as the Charge relay system. A Nuclear export signal motif is present at residues 146–156 (IDHPVLSKLKF). The tract at residues 157–162 (TKSSAY) is interaction with spike glycoprotein E2. Asp163 functions as the Charge relay system in the catalytic mechanism. Residues 185-195 (PEGFYNWHHGA) are dimerization of the capsid protein. Residue Ser215 is the Charge relay system of the active site. Positions 221-225 (DNSGR) are dimerization of the capsid protein. The tract at residues 249–253 (SKGKT) is interaction with spike glycoprotein E2. The interval 265-279 (SAAPLVTAMCLLGNV) is functions as an uncleaved signal peptide for the precursor of protein E3/E2. Asn278 carries N-linked (GlcNAc...) asparagine; by host glycosylation. Disulfide bonds link Cys283-Cys289, Cys480-Cys594, Cys529-Cys554, and Cys531-Cys548. Topologically, residues 329-690 (SVTDDFTLTS…HEIVQHYYHR (362 aa)) are extracellular. N-linked (GlcNAc...) asparagine; by host glycosylation occurs at Asn524. N-linked (GlcNAc...) asparagine; by host glycosylation is present at Asn646. A helical transmembrane segment spans residues 691–718 (HPVYTILAVASAAVAMMIGVTVAALCAC). The tract at residues 719-723 (KARRE) is interaction with the capsid protein. The Cytoplasmic portion of the chain corresponds to 719–751 (KARRECLTPYALAPNAVIPTSLALLCCVRSANA). Residues Cys724, Cys744, and Cys745 are each lipidated (S-palmitoyl cysteine; by host). A disulfide bridge connects residues Cys724 and Cys745. Topologically, residues 752–763 (ETFTETMSYFWS) are extracellular. A helical transmembrane segment spans residues 764–784 (NSQPFFWVQLCIPLAAVIVLM). Arg785 is a topological domain (cytoplasmic). A helical membrane pass occupies residues 786–806 (CCSCCLPFLVVAGAYLAKVDA). Over 807 to 1214 (YEHATTVPNV…QAAISKTSWS (408 aa)) the chain is Extracellular. 4 disulfide bridges follow: Cys855/Cys920, Cys868/Cys900, Cys869/Cys902, and Cys874/Cys884. Residues 890–907 (VYPFMWGGAQCFCDSENS) are E1 fusion peptide loop. 2 N-linked (GlcNAc...) asparagine; by host glycosylation sites follow: Asn945 and Asn1051. 4 disulfides stabilise this stretch: Cys1065/Cys1077, Cys1107/Cys1182, Cys1112/Cys1186, and Cys1134/Cys1176. The chain crosses the membrane as a helical span at residues 1215 to 1239 (WLFALFGGASSLLIIGLTIFACSMM). The Cytoplasmic segment spans residues 1240–1245 (LTSTRR).

In terms of assembly, homodimer. Homomultimer. Interacts with host karyopherin KPNA4; this interaction allows the nuclear import of the viral capsid protein. Interacts with spike glycoprotein E2. Interacts with host IRAK1; the interaction leads to inhibition of IRAK1-dependent signaling. As to quaternary structure, the precursor of protein E3/E2 and E1 form a heterodimer shortly after synthesis. The precursor of protein E3/E2 and E1 form a heterodimer shortly after synthesis. Processing of the precursor of protein E3/E2 into E2 and E3 results in a heterodimer of the spike glycoproteins E2 and E1. Spike at virion surface are constituted of a trimer of E2-E1 heterodimers. After target cell attachment and endocytosis, E1 change conformation to form homotrimers. E2-E1 heterodimers interact with host VLDLR or LRP8/APOER2 to mediate viral entry. Interacts with 6K protein. In terms of assembly, processing of the precursor of protein E3/E2 into E2 and E3 results in a heterodimer of the spike glycoproteins E2 and E1. Spike at virion surface are constituted of a trimer of E2-E1 heterodimers. E2-E1 heterodimers interact with host VLDLR or LRP8/APOER2 to mediate viral entry. Interacts with 6K protein. Interacts with the capsid protein. As to quaternary structure, oligomer. Interacts with spike glycoprotein E1. Interacts with spike glycoprotein E2. In terms of processing, structural polyprotein: Specific enzymatic cleavages in vivo yield mature proteins. Capsid protein is auto-cleaved during polyprotein translation, unmasking a signal peptide at the N-terminus of the precursor of E3/E2. The remaining polyprotein is then targeted to the host endoplasmic reticulum, where host signal peptidase cleaves it into pE2, 6K and E1 proteins. pE2 is further processed to mature E3 and E2 by host furin in trans-Golgi vesicle. Palmitoylated via thioester bonds. These palmitoylations may induce disruption of the C-terminus transmembrane. This would result in the reorientation of E2 C-terminus from lumenal to cytoplasmic side. Post-translationally, N-glycosylated. In terms of processing, palmitoylated via thioester bonds.

It localises to the virion. The protein localises to the host cytoplasm. It is found in the host cell membrane. The protein resides in the host nucleus. Its subcellular location is the virion membrane. It localises to the host Golgi apparatus. The protein localises to the host trans-Golgi network. It is found in the host endoplasmic reticulum. The enzyme catalyses Autocatalytic release of the core protein from the N-terminus of the togavirus structural polyprotein by hydrolysis of a -Trp-|-Ser- bond.. Its function is as follows. Forms an icosahedral capsid with a T=4 symmetry composed of 240 copies of the capsid protein surrounded by a lipid membrane through which penetrate 80 spikes composed of trimers of E1-E2 heterodimers. The capsid protein binds to the viral RNA genome at a site adjacent to a ribosome binding site for viral genome translation following genome release. Possesses a protease activity that results in its autocatalytic cleavage from the nascent structural protein. Following its self-cleavage, the capsid protein transiently associates with ribosomes, and within several minutes the protein binds to viral RNA and rapidly assembles into icosahedric core particles. The resulting nucleocapsid eventually associates with the cytoplasmic domain of the spike glycoprotein E2 at the cell membrane, leading to budding and formation of mature virions. In case of infection, new virions attach to target cells and after clathrin-mediated endocytosis their membrane fuses with the host endosomal membrane. This leads to the release of the nucleocapsid into the cytoplasm, followed by an uncoating event necessary for the genomic RNA to become accessible. The uncoating might be triggered by the interaction of capsid proteins with ribosomes. Binding of ribosomes would release the genomic RNA since the same region is genomic RNA-binding and ribosome-binding. Specifically inhibits interleukin-1 receptor-associated kinase 1/IRAK1-dependent signaling during viral entry, representing a means by which the alphaviruses may evade innate immune detection and activation prior to viral gene expression. Provides the signal sequence for the translocation of the precursor of protein E3/E2 to the host endoplasmic reticulum. Furin-cleaved E3 remains associated with spike glycoprotein E1 and mediates pH protection of the latter during the transport via the secretory pathway. After virion release from the host cell, the assembly protein E3 is gradually released in the extracellular space. In terms of biological role, plays a role in viral attachment to target host cell, by binding to the cell receptors VLDLR or LRP8/APOER2. Synthesized as a pE2 precursor which is processed by furin at the cell membrane just before virion budding, giving rise to E2-E1 heterodimer. The pE2-E1 heterodimer is stable, whereas E2-E1 is unstable and dissociate at low pH. pE2 is processed at the last step, presumably to avoid E1 fusion activation before its final export to cell surface. E2 C-terminus contains a transitory transmembrane that would be disrupted by palmitoylation, resulting in reorientation of the C-terminal tail from lumenal to cytoplasmic side. This step is critical since E2 C-terminus is involved in budding by interacting with capsid proteins. This release of E2 C-terminus in cytoplasm occurs lately in protein export, and precludes premature assembly of particles at the endoplasmic reticulum membrane. Functionally, acts as a viroporin that participates in virus glycoprotein processing and transport to the plasma membrane, cell permeabilization and budding of viral particles. Disrupts the calcium homeostasis of the cell, probably at the endoplasmic reticulum level resulting in the increased levels of cytoplasmic calcium. Because of its lipophilic properties, the 6K protein is postulated to influence the selection of lipids that interact with the transmembrane domains of the glycoproteins, which, in turn, affects the deformability of the bilayer required for the extreme curvature that occurs as budding proceeds. Present in low amount in virions, about 3% compared to viral glycoproteins. Its function is as follows. Class II viral fusion protein. Fusion activity is inactive as long as E1 is bound to E2 in mature virion. After virus attachment to target cell via host VLDLR or LRP8/APOER2 and endocytosis, acidification of the endosome induces dissociation of E1/E2 heterodimer and concomitant trimerization of the E1 subunits. This E1 trimer is fusion active, and promotes release of viral nucleocapsid in cytoplasm after endosome and viral membrane fusion. Efficient fusion requires the presence of cholesterol and sphingolipid in the target membrane. In Acrocephalus scirpaceus (Eurasian reed-warbler), this protein is Structural polyprotein.